The chain runs to 359 residues: Isopentenyl-diphosphate delta-isomerase (359 aa).

11 to 12 contributes to the substrate binding site; that stretch reads RK. Residues Ser-68, 69–71, Ser-99, and Asn-127 contribute to the FMN site; that span reads GMT. 99–101 contributes to the substrate binding site; the sequence is SQR. Residue Gln-163 coordinates substrate. Glu-164 contributes to the Mg(2+) binding site. Residues Lys-199, Thr-229, 278–280, and 299–300 each bind FMN; these read GIR and AL.

The protein belongs to the IPP isomerase type 2 family. Homooctamer. Dimer of tetramers. Requires FMN as cofactor. The cofactor is NADPH. It depends on Mg(2+) as a cofactor.

Its subcellular location is the cytoplasm. The enzyme catalyses isopentenyl diphosphate = dimethylallyl diphosphate. With respect to regulation, inhibited by 3,4-epoxy-3-methylbutyl diphosphate (EIPP). Involved in the biosynthesis of isoprenoids. Catalyzes the 1,3-allylic rearrangement of the homoallylic substrate isopentenyl (IPP) to its allylic isomer, dimethylallyl diphosphate (DMAPP). In Methanocaldococcus jannaschii (strain ATCC 43067 / DSM 2661 / JAL-1 / JCM 10045 / NBRC 100440) (Methanococcus jannaschii), this protein is Isopentenyl-diphosphate delta-isomerase.